Consider the following 222-residue polypeptide: MTISRSTMAQILDYTLLGPEVTNSELAAFIDSAIELGVGTICVPNSMVNLTAKAQEAGIRVATVAGFPHGKTPALVKAAEARLAVQSGASEVDVVLDIAVVKEGDANRLLQEIVAIREAVPSPVVLKFILETAVVSDEAIVTAVNALIAAGADFAKTSTGFHPAGGATVEAVRVMASASRGRVGIKAAGGVKTWEDAVAFVEAGATRIGTSNAGAILEGAPE.

The active-site Proton donor/acceptor is D93. The active-site Schiff-base intermediate with acetaldehyde is K156. The active-site Proton donor/acceptor is K186.

It belongs to the DeoC/FbaB aldolase family. DeoC type 1 subfamily.

It localises to the cytoplasm. It carries out the reaction 2-deoxy-D-ribose 5-phosphate = D-glyceraldehyde 3-phosphate + acetaldehyde. Its pathway is carbohydrate degradation; 2-deoxy-D-ribose 1-phosphate degradation; D-glyceraldehyde 3-phosphate and acetaldehyde from 2-deoxy-alpha-D-ribose 1-phosphate: step 2/2. In terms of biological role, catalyzes a reversible aldol reaction between acetaldehyde and D-glyceraldehyde 3-phosphate to generate 2-deoxy-D-ribose 5-phosphate. This Corynebacterium glutamicum (strain ATCC 13032 / DSM 20300 / JCM 1318 / BCRC 11384 / CCUG 27702 / LMG 3730 / NBRC 12168 / NCIMB 10025 / NRRL B-2784 / 534) protein is Deoxyribose-phosphate aldolase.